The primary structure comprises 31 residues: Beta-endorphin (31 aa).

This sequence belongs to the POMC family.

It localises to the secreted. In terms of biological role, beta-endorphin and Met-enkephalin are endogenous opiates. This Camelus dromedarius (Dromedary) protein is Beta-endorphin (POMC).